The chain runs to 36 residues: Photosystem I reaction center subunit VIII (36 aa).

The helical transmembrane segment at 7–29 threads the bilayer; sequence PSIFVPLVGLVFPAITMASLFIY.

It belongs to the PsaI family.

It is found in the plastid. It localises to the chloroplast thylakoid membrane. Functionally, may help in the organization of the PsaL subunit. The protein is Photosystem I reaction center subunit VIII of Psilotum nudum (Whisk fern).